A 343-amino-acid polypeptide reads, in one-letter code: MASLQRSRVLRCCSCRLFQAHQVKKSVKWTCKACGEKQSFLQAYGEGSGADCRRHVQKLNLLQGQVSELPLRSLEETVSASEEENVGHQQAGNVKQQEKSQPSESRWLKYLEKDSQELELEGTGVCFSKQPSSKMEEPGPRFSQDLPRKRKWSRSTVQPPCSRGVQDSGGSEVAWGPQKGQAGLTWKVKQGSSPCLQENSADCSAGELRGPGKELWSPIQQVTATSSKWAQFVLPPRKSSHVDSEQPRSLQRDPRPAGPAQAKQGTPRAQASREGLSRPTAAVQLPRATHPVTSGSERPCGKTSWDARTPWAEGGPLVLEAQNPRPTRLCDLFITGEDFDDDV.

The disordered stretch occupies residues 75–104; the sequence is EETVSASEEENVGHQQAGNVKQQEKSQPSE. Polar residues predominate over residues 87-104; it reads GHQQAGNVKQQEKSQPSE. Residues Ser100 and Ser115 each carry the phosphoserine modification. Disordered stretches follow at residues 128–178, 193–212, and 230–324; these read SKQP…WGPQ, SPCL…RGPG, and AQFV…AQNP. The Nuclear localization signal (NLS) signature appears at 148 to 151; that stretch reads RKRK. Polar residues predominate over residues 193-202; sequence SPCLQENSAD. The necessary for the association with the MRN complex stretch occupies residues 213 to 237; that stretch reads KELWSPIQQVTATSSKWAQFVLPPR. Basic and acidic residues predominate over residues 240 to 255; it reads SHVDSEQPRSLQRDPR.

The protein belongs to the MRNIP family. In terms of assembly, associates with the MRE11-RAD50-NBN (MRN) damage-sensing complex; this association is constitutive. Interacts with MRE11. Interacts with NBN. Interacts with RAD50. Post-translationally, phosphorylated; phosphorylation is constitutive and occurs in the absence of any DNA-damaging stimulus. Phosphorylation on Ser-115 is necessary for its nuclear retention.

The protein localises to the nucleus. It is found in the nucleoplasm. Its function is as follows. Plays a role in the cellular response to DNA damage and the maintenance of genome stability through its association with the MRN damage-sensing complex. Promotes chromatin loading and activity of the MRN complex to facilitate subsequent ATM-mediated DNA damage response signaling and DNA repair. This chain is MRN complex-interacting protein, found in Homo sapiens (Human).